Reading from the N-terminus, the 66-residue chain is Beta-mammal toxin Co3 (66 aa).

Residues 1 to 66 enclose the LCN-type CS-alpha/beta domain; the sequence is KEGYIVNYYD…VWPLPNKTCN (66 aa). 4 disulfides stabilise this stretch: Cys-12–Cys-65, Cys-16–Cys-41, Cys-25–Cys-46, and Cys-29–Cys-48.

Expressed by the venom gland.

Its subcellular location is the secreted. Its function is as follows. Beta toxins bind voltage-independently at site-4 of sodium channels (Nav) and shift the voltage of activation toward more negative potentials thereby affecting sodium channel activation and promoting spontaneous and repetitive firing. This toxin acts on human Nav1.2/SCN2A, Nav1.4/SCN4A and Nav1.6/SCN8A voltage-gated sodium channels. Also, it reduces the peak of sodium currents in Nav1.5/SCN5A at all potentials. In vivo, is lethal to mice when intraperitoneally injected at a dose of 5ug. No activity is observed when injected into crickets or woodlice. This chain is Beta-mammal toxin Co3, found in Centruroides ornatus (Scorpion).